A 546-amino-acid polypeptide reads, in one-letter code: MTMFASLTSKMLSVSTSDHASVVSLNLFVALLCACIVIGHLLEENRWMNESITALLIGLGTGVVILLISRGKNSHLLVFSEDLFFIYLLPPIIFNAGFQVKKKQFFRNFVTIMAFGAIGTVVSCTIISLGAIQFFKKLDIGTFDLGDFLAIGAIFAATDSVCTLQVLNQDETPLLYSLVFGEGVVNDATSVVLFNAIQSFDLTHLNHEAAFQFLGNFFYLFLLSTGLGVATGLISAYVIKKLYFGRHSTDREVALMMLMAYLSYMLAELFALSGILTVFFCGIVMSHYTWHNVTESSRITTKHAFATLSFLAETFIFLYVGMDALDIEKWRFVSDSPGTSVAVSSILMGLVMLGRAAFVFPLSFLSNLAKKHQSEKISIKQQVVIWWAGLMRGAVSMALAYNKFTRSGHTELRGNAIMITSTITVCLFSTMVFGMLTKPLIRYLMPHQKATTSTTSMLSDDSTPKSIHIPLLDGEQLDSFELPGSHQDVPRPNSLRGFLMRPTRTVHYYWRQFDDAFMRPVFGGRGFVPFVPGSPTERSSHDLSKP.

The Cytoplasmic segment spans residues 1–21 (MTMFASLTSKMLSVSTSDHAS). A helical membrane pass occupies residues 22-42 (VVSLNLFVALLCACIVIGHLL). Over 43 to 47 (EENRW) the chain is Vacuolar. The helical transmembrane segment at 48–68 (MNESITALLIGLGTGVVILLI) threads the bilayer. At 69-75 (SRGKNSH) the chain is on the cytoplasmic side. The helical intramembrane region spans 76 to 96 (LLVFSEDLFFIYLLPPIIFNA). The Cytoplasmic segment spans residues 97-111 (GFQVKKKQFFRNFVT). Residues 112-132 (IMAFGAIGTVVSCTIISLGAI) form a helical membrane-spanning segment. The Vacuolar segment spans residues 133–148 (QFFKKLDIGTFDLGDF). 2 consecutive intramembrane regions (helical) follow at residues 149–168 (LAIGAIFAATDSVCTLQVLN) and 174–194 (LLYSLVFGEGVVNDATSVVLF). Topologically, residues 195–218 (NAIQSFDLTHLNHEAAFQFLGNFF) are vacuolar. Residues 219–239 (YLFLLSTGLGVATGLISAYVI) traverse the membrane as a helical segment. Residues 240-264 (KKLYFGRHSTDREVALMMLMAYLSY) are Cytoplasmic-facing. Residues 265-285 (MLAELFALSGILTVFFCGIVM) traverse the membrane as a helical segment. Topologically, residues 286–304 (SHYTWHNVTESSRITTKHA) are vacuolar. N-linked (GlcNAc...) asparagine glycosylation occurs at asparagine 292. The helical transmembrane segment at 305 to 325 (FATLSFLAETFIFLYVGMDAL) threads the bilayer. Topologically, residues 326-344 (DIEKWRFVSDSPGTSVAVS) are cytoplasmic. The chain crosses the membrane as a helical span at residues 345 to 365 (SILMGLVMLGRAAFVFPLSFL). At 366–381 (SNLAKKHQSEKISIKQ) the chain is on the vacuolar side. A helical transmembrane segment spans residues 382-402 (QVVIWWAGLMRGAVSMALAYN). The Cytoplasmic portion of the chain corresponds to 403–415 (KFTRSGHTELRGN). A helical membrane pass occupies residues 416–436 (AIMITSTITVCLFSTMVFGML). Topologically, residues 437–546 (TKPLIRYLMP…ERSSHDLSKP (110 aa)) are vacuolar.

This sequence belongs to the monovalent cation:proton antiporter 1 (CPA1) transporter (TC 2.A.36) family. Expressed in roots and shoots.

The protein localises to the vacuole membrane. The catalysed reaction is Na(+)(in) + H(+)(out) = Na(+)(out) + H(+)(in). The enzyme catalyses K(+)(in) + H(+)(out) = K(+)(out) + H(+)(in). Functionally, acts in low affinity electroneutral exchange of protons for cations such as Na(+) or K(+) across membranes. May also exchange Li(+) and Cs(+) with a lower affinity. Involved in vacuolar ion compartmentalization necessary for cell volume regulation and cytoplasmic Na(+) detoxification. This Arabidopsis thaliana (Mouse-ear cress) protein is Sodium/hydrogen exchanger 2 (NHX2).